Consider the following 297-residue polypeptide: Homoserine kinase (297 aa).

Residue 82 to 92 participates in ATP binding; that stretch reads PLTRGLGSSAS.

It belongs to the GHMP kinase family. Homoserine kinase subfamily.

The protein localises to the cytoplasm. It carries out the reaction L-homoserine + ATP = O-phospho-L-homoserine + ADP + H(+). It participates in amino-acid biosynthesis; L-threonine biosynthesis; L-threonine from L-aspartate: step 4/5. In terms of biological role, catalyzes the ATP-dependent phosphorylation of L-homoserine to L-homoserine phosphate. The polypeptide is Homoserine kinase (Bacillus thuringiensis (strain Al Hakam)).